The primary structure comprises 356 residues: tRNA N6-adenosine threonylcarbamoyltransferase (356 aa).

Fe cation contacts are provided by H114 and H118. Substrate contacts are provided by residues 136–140, D169, G182, and N280; that span reads LVSGG. D308 is a Fe cation binding site. Positions 333–356 are disordered; it reads ARPRWPLDNSQPALLGSGKKGAKA.

This sequence belongs to the KAE1 / TsaD family. Requires Fe(2+) as cofactor.

Its subcellular location is the cytoplasm. It catalyses the reaction L-threonylcarbamoyladenylate + adenosine(37) in tRNA = N(6)-L-threonylcarbamoyladenosine(37) in tRNA + AMP + H(+). In terms of biological role, required for the formation of a threonylcarbamoyl group on adenosine at position 37 (t(6)A37) in tRNAs that read codons beginning with adenine. Is involved in the transfer of the threonylcarbamoyl moiety of threonylcarbamoyl-AMP (TC-AMP) to the N6 group of A37, together with TsaE and TsaB. TsaD likely plays a direct catalytic role in this reaction. This chain is tRNA N6-adenosine threonylcarbamoyltransferase, found in Dinoroseobacter shibae (strain DSM 16493 / NCIMB 14021 / DFL 12).